The sequence spans 842 residues: Elongation factor 2 (842 aa).

In terms of domain architecture, tr-type G spans 17 to 253; the sequence is TNVRNMSVIA…LWGDSYFNPK (237 aa). Residues 26–33, 158–161, and 213–215 contribute to the GTP site; these read AHVDHGKS, NKVD, and SGL. Diphthamide is present on H699.

This sequence belongs to the TRAFAC class translation factor GTPase superfamily. Classic translation factor GTPase family. EF-G/EF-2 subfamily.

It localises to the cytoplasm. The catalysed reaction is GTP + H2O = GDP + phosphate + H(+). In terms of biological role, catalyzes the GTP-dependent ribosomal translocation step during translation elongation. During this step, the ribosome changes from the pre-translocational (PRE) to the post-translocational (POST) state as the newly formed A-site-bound peptidyl-tRNA and P-site-bound deacylated tRNA move to the P and E sites, respectively. Catalyzes the coordinated movement of the two tRNA molecules, the mRNA and conformational changes in the ribosome. This Kluyveromyces lactis (strain ATCC 8585 / CBS 2359 / DSM 70799 / NBRC 1267 / NRRL Y-1140 / WM37) (Yeast) protein is Elongation factor 2 (EFT1).